Reading from the N-terminus, the 361-residue chain is MLYWLIDFASTIPAFNVFRYITFRTGGAMVTGALFVFLCGPWIIDNLRLRQGKGQPIRSDGPQSHLSKKGTPTMGGLMVLSGLVVGTVLWANPLNPYVWIVLAVTLGFGFVGFYDDYLKVTKQSSQNGFAGRWRLLIEAVIAAAACYALVRLGRDPLSSSLVIPFFKDVAINLGWFFVGFGAFIVVGAGNAVNLTDGLDGLAIVPVMIAAASFGLISYLAGNAVFADYLQINYVAGTGELSVLCGALLGAGLGFLWFNAPPASIFMGDTGSLALGGMLGSIAVAVKHEIVLAVIGGLFVLEAVSVIVQVASFKLTGKRVFKMAPIHHHFEQKGWTEPQIVIRFWIIAVMLALAGLSTLKLR.

A run of 10 helical transmembrane segments spans residues 25 to 45 (TGGA…WIID), 71 to 91 (TPTM…VLWA), 94 to 114 (LNPY…VGFY), 133 to 153 (WRLL…VRLG), 169 to 189 (VAIN…VGAG), 200 to 220 (GLAI…SYLA), 240 to 260 (LSVL…FNAP), 264 to 284 (IFMG…IAVA), 289 to 309 (IVLA…IVQV), and 338 to 358 (QIVI…LSTL).

It belongs to the glycosyltransferase 4 family. MraY subfamily. It depends on Mg(2+) as a cofactor.

It is found in the cell inner membrane. The catalysed reaction is UDP-N-acetyl-alpha-D-muramoyl-L-alanyl-gamma-D-glutamyl-meso-2,6-diaminopimeloyl-D-alanyl-D-alanine + di-trans,octa-cis-undecaprenyl phosphate = di-trans,octa-cis-undecaprenyl diphospho-N-acetyl-alpha-D-muramoyl-L-alanyl-D-glutamyl-meso-2,6-diaminopimeloyl-D-alanyl-D-alanine + UMP. Its pathway is cell wall biogenesis; peptidoglycan biosynthesis. Catalyzes the initial step of the lipid cycle reactions in the biosynthesis of the cell wall peptidoglycan: transfers peptidoglycan precursor phospho-MurNAc-pentapeptide from UDP-MurNAc-pentapeptide onto the lipid carrier undecaprenyl phosphate, yielding undecaprenyl-pyrophosphoryl-MurNAc-pentapeptide, known as lipid I. The polypeptide is Phospho-N-acetylmuramoyl-pentapeptide-transferase (Rhodopseudomonas palustris (strain BisB18)).